The sequence spans 239 residues: Small ribosomal subunit protein uS3c (239 aa).

One can recognise a KH type-2 domain in the interval 43–139; it reads IKNYIQKNRK…RFNISIEKVK (97 aa). The disordered stretch occupies residues 50–74; the sequence is NRKKGSNRKIESDSSSEVITHNRKM.

This sequence belongs to the universal ribosomal protein uS3 family. Part of the 30S ribosomal subunit.

The protein localises to the plastid. It localises to the chloroplast. In Triticum aestivum (Wheat), this protein is Small ribosomal subunit protein uS3c (rps3).